Consider the following 26-residue polypeptide: Protein YsdD (26 aa).

The tract at residues 1–26 (MTIDKNWLNRSNKDPGRSLRFTHQPV) is disordered.

The sequence is that of Protein YsdD from Escherichia coli (strain K12).